Here is a 435-residue protein sequence, read N- to C-terminus: Sulfopropanediol 3-dehydrogenase (435 aa).

The NAD(+) site is built by Y119, Q181, and N204. The Zn(2+) site is built by Q249 and H252. Catalysis depends on proton acceptor residues E319 and H320. Zn(2+) is bound by residues D353 and H412.

The protein belongs to the histidinol dehydrogenase family. HpsN subfamily. It depends on Zn(2+) as a cofactor.

It carries out the reaction (2R)-3-sulfopropanediol + 2 NAD(+) + H2O = (2R)-3-sulfolactate + 2 NADH + 3 H(+). In terms of biological role, catalyzes the NAD-dependent oxidation of (R)-2,3-dihydroxypropane-1-sulfonate to (R)-3-sulfolactate. The sequence is that of Sulfopropanediol 3-dehydrogenase from Ruegeria pomeroyi (strain ATCC 700808 / DSM 15171 / DSS-3) (Silicibacter pomeroyi).